The sequence spans 225 residues: Glucose-induced degradation protein 8 homolog (225 aa).

A LisH domain is found at 22–54 (QRAEMNRLIMDYLVTEGYKEAAEKFRIESGTQP). Residues 60–117 (SLDDRIKIREAVQKGDLEQAVSMTNKLNPDILDSNQQLYFHLQQQRLIELIREKDIEA) enclose the CTLH domain.

The protein belongs to the GID8 family.

It localises to the cytoplasm. It is found in the nucleus. Functionally, core component of the CTLH E3 ubiquitin-protein ligase complex that mediates ubiquitination and subsequent proteasomal degradation of target proteins. Acts as a positive regulator of Wnt signaling pathway by promoting beta-catenin (CTNNB1) nuclear accumulation. In Nematostella vectensis (Starlet sea anemone), this protein is Glucose-induced degradation protein 8 homolog.